A 283-amino-acid polypeptide reads, in one-letter code: MMRIALFLATNFAVMIVLGIILSVTGIAGNSTGGILIMSVLFGFAGSLISLFMSKTMALKSVGAEIITEPRNNAERWLVETVKRQSQQAGIPMPDVAIYHSADVNAFATGATKSNSLVAVSTGLLNTMTEDEAEAVVAHEVAHIANGDMVTMTLLQGVLNTFVIFLSRMIATAVSSSRNDDGEETQSSGTYFLVSMVLEILFGVLATIIAMWFSRYREFRADAGSAQLVGKEKMIAALQRLQRVHDPEELPGSLNAMMINGKAKEFFMSHPPLEKRIEALRNL.

2 consecutive transmembrane segments (helical) span residues 4–24 (IALF…ILSV) and 33–53 (GGIL…SLFM). Residue His-139 participates in Zn(2+) binding. Glu-140 is an active-site residue. Residue His-143 participates in Zn(2+) binding. The next 2 helical transmembrane spans lie at 147-167 (GDMV…IFLS) and 192-212 (FLVS…IAMW). Glu-218 is a binding site for Zn(2+).

It belongs to the peptidase M48B family. Requires Zn(2+) as cofactor.

Its subcellular location is the cell inner membrane. This is Protease HtpX from Glaesserella parasuis serovar 5 (strain SH0165) (Haemophilus parasuis).